The chain runs to 735 residues: Muskelin (735 aa).

A2 bears the N-acetylalanine mark. Positions 172-204 constitute a LisH domain; the sequence is REQEAIRLCLKHFRQHNYTEAFESLQKKTKIAL. The CTLH domain occupies 206–258; sequence HPMLTDMHDKLVLKGDFDACEELIEKAVNDGLFNQYISQQEYKPRWSQIIPKS. Kelch repeat units follow at residues 284–330, 339–391, 400–458, 469–515, 526–578, and 597–651; these read TVYL…SCHK, QIYT…FDHQ, MIYT…SRIG, CLYV…TGFT, EIHV…SLQE, and VHYL…AQMD. The segment at 701–735 is important for location in the cytosol; sequence DHTYAQRTQLFDTLVNFFPDSMTPPKGNLVDLITL.

Homodimer; may form higher oligomers. Identified in the CTLH complex that contains GID4, RANBP9 and/or RANBP10, MKLN1, MAEA, RMND5A (or alternatively its paralog RMND5B), GID8, ARMC8, WDR26 and YPEL5. Within this complex, MAEA, RMND5A (or alternatively its paralog RMND5B), GID8, WDR26, and RANBP9 and/or RANBP10 form the catalytic core, while GID4, MKLN1, ARMC8 and YPEL5 have ancillary roles. Interacts with RANBP9. Part of a complex consisting of RANBP9, MKLN1 and GID8. Interacts with GABRA1. Interacts with the C-terminal tail of PTGER3. Detected in brain, especially in hippocampus and cerebellum (at protein level).

The protein localises to the cytoplasm. The protein resides in the cytosol. Its subcellular location is the nucleus. It localises to the nucleoplasm. It is found in the cell projection. The protein localises to the ruffle. The protein resides in the cell cortex. Its subcellular location is the synapse. It localises to the postsynapse. Functionally, component of the CTLH E3 ubiquitin-protein ligase complex that selectively accepts ubiquitin from UBE2H and mediates ubiquitination and subsequent proteasomal degradation of the transcription factor HBP1. Required for internalization of the GABA receptor GABRA1 from the cell membrane via endosomes and subsequent GABRA1 degradation. Acts as a mediator of cell spreading and cytoskeletal responses to the extracellular matrix component THBS1. The sequence is that of Muskelin (Mkln1) from Mus musculus (Mouse).